The primary structure comprises 72 residues: uncharacterized protein (72 aa).

This is an uncharacterized protein from Vaccinia virus (strain Western Reserve) (VACV).